The sequence spans 811 residues: Receptor-like protein 46 (811 aa).

The first 21 residues, 1 to 21, serve as a signal peptide directing secretion; the sequence is MSKQCLLSCFLFFCFFIPQLS. Residues 22 to 782 are Extracellular-facing; the sequence is FSCPQDQRQS…EEEDKEEEET (761 aa). Residues asparagine 46, asparagine 71, asparagine 128, and asparagine 143 are each glycosylated (N-linked (GlcNAc...) asparagine). LRR repeat units lie at residues 104–128, 129–153, 155–177, 178–201, 203–225, 226–249, 251–273, 275–298, 299–322, 324–348, 349–369, 370–395, 397–419, 421–442, 443–466, 468–488, 490–510, 511–534, 536–560, 561–583, 643–665, 666–688, 690–713, and 714–738; these read INSL…AFVN, LTSL…LFSL, NLQR…IKEL, KNLQ…IGSL, ELLT…VSRL, TKLK…IGNL, NLST…IHNL, NLET…WLFG, LQKL…GYVF, QFKL…LKNQ, TALV…PKWL, ADLK…LFQR, SLYY…IGES, VMVL…ITKI, PFLK…RPES, LEWL…YFGG, TSML…NFRN, LSYL…LISQ, SSSV…ISNL, TSLK…SLGN, LYTL…LGNL, KSLK…SFGD, EKVE…LSKL, and SELN…QLDR. N-linked (GlcNAc...) asparagine glycosylation is present at asparagine 215. N-linked (GlcNAc...) asparagine glycosylation is present at asparagine 251. N-linked (GlcNAc...) asparagine glycosylation occurs at asparagine 347. Asparagine 376, asparagine 407, and asparagine 430 each carry an N-linked (GlcNAc...) asparagine glycan. Residues asparagine 499 and asparagine 510 are each glycosylated (N-linked (GlcNAc...) asparagine). N-linked (GlcNAc...) asparagine glycosylation is found at asparagine 546, asparagine 559, and asparagine 583. Residues asparagine 672 and asparagine 701 are each glycosylated (N-linked (GlcNAc...) asparagine). N-linked (GlcNAc...) asparagine glycosylation occurs at asparagine 747. Residues 783-803 form a helical membrane-spanning segment; sequence IFSWNAAAIGCSCGFLIAVVF. Residues 804–811 lie on the Cytoplasmic side of the membrane; that stretch reads MSYNELWK.

It belongs to the RLP family.

The protein resides in the cell membrane. The sequence is that of Receptor-like protein 46 from Arabidopsis thaliana (Mouse-ear cress).